A 182-amino-acid chain; its full sequence is ATP synthase subunit delta, mitochondrial (182 aa).

A mitochondrion-targeting transit peptide spans 1 to 17 (MFRTFGRRLVSCTLPLL).

It belongs to the ATPase epsilon chain family. As to quaternary structure, F-type ATPases have 2 components, F(1) - the catalytic core - and F(o) - the membrane proton channel. F(1) has five subunits: alpha(3), beta(3), gamma(1), delta(1), epsilon(1), plus the additional subunit P18 (Tb427.05.1710) that is not present in F(1)F(o) ATP synthase from metazoa. Subunit P18 (Tb927.5.1710) interacts with the alpha subunit with a 1:1 stoichiometry; the interaction is direct. Subunit gamma is part of the central stalk. F(o) has three main subunits: a, b and c. The trypanosomal ATPase complex contains additional subunits that are not present in the F(1)F(o) ATP synthase from metazoa.

The protein localises to the mitochondrion. The protein resides in the mitochondrion inner membrane. Mitochondrial membrane ATP synthase (F(1)F(o) ATP synthase) produces ATP from ADP in the presence of a proton gradient across the membrane which is generated by electron transport complexes of the respiratory chain. F-type ATPases consist of two structural domains, F(1) - containing the extramembraneous catalytic core, and F(o) - containing the membrane proton channel, linked together by a central stalk and a peripheral stalk. During catalysis, ATP synthesis in the catalytic domain of F(1) is coupled via a rotary mechanism of the central stalk subunits to proton translocation. Subunits alpha and beta form the catalytic core in F(1). Rotation of the central stalk against the surrounding alpha(3)beta(3) subunits leads to hydrolysis of ATP in three separate catalytic sites on the beta subunits. Contrary to the procyclic, insect form that requires F(1)F(o) ATP synthase for ATP synthesis, the bloodstream form relies on ATP hydrolysis by F(1)F(o) ATP synthase to maintain its mitochondrial membrane potential. In Trypanosoma brucei brucei, this protein is ATP synthase subunit delta, mitochondrial.